The chain runs to 137 residues: Large ribosomal subunit protein uL16 (137 aa).

It belongs to the universal ribosomal protein uL16 family. In terms of assembly, part of the 50S ribosomal subunit.

In terms of biological role, binds 23S rRNA and is also seen to make contacts with the A and possibly P site tRNAs. This Anaplasma phagocytophilum (strain HZ) protein is Large ribosomal subunit protein uL16.